Reading from the N-terminus, the 66-residue chain is Large ribosomal subunit protein uL29 (66 aa).

This sequence belongs to the universal ribosomal protein uL29 family.

The polypeptide is Large ribosomal subunit protein uL29 (Allorhizobium ampelinum (strain ATCC BAA-846 / DSM 112012 / S4) (Agrobacterium vitis (strain S4))).